The primary structure comprises 451 residues: Serine--tRNA ligase (451 aa).

258-260 is a binding site for L-serine; it reads TSE. 289 to 291 is a binding site for ATP; the sequence is RSE. Glutamate 312 contributes to the L-serine binding site. ATP is bound at residue 376-379; the sequence is EISS. Residue serine 411 participates in L-serine binding.

Belongs to the class-II aminoacyl-tRNA synthetase family. Type-1 seryl-tRNA synthetase subfamily. As to quaternary structure, homodimer. The tRNA molecule binds across the dimer.

It localises to the cytoplasm. The catalysed reaction is tRNA(Ser) + L-serine + ATP = L-seryl-tRNA(Ser) + AMP + diphosphate + H(+). The enzyme catalyses tRNA(Sec) + L-serine + ATP = L-seryl-tRNA(Sec) + AMP + diphosphate + H(+). It participates in aminoacyl-tRNA biosynthesis; selenocysteinyl-tRNA(Sec) biosynthesis; L-seryl-tRNA(Sec) from L-serine and tRNA(Sec): step 1/1. Catalyzes the attachment of serine to tRNA(Ser). Is also able to aminoacylate tRNA(Sec) with serine, to form the misacylated tRNA L-seryl-tRNA(Sec), which will be further converted into selenocysteinyl-tRNA(Sec). The protein is Serine--tRNA ligase of Bordetella bronchiseptica (strain ATCC BAA-588 / NCTC 13252 / RB50) (Alcaligenes bronchisepticus).